The chain runs to 483 residues: Glutamyl-tRNA(Gln) amidotransferase subunit A (483 aa).

Residues Lys76 and Ser151 each act as charge relay system in the active site. The active-site Acyl-ester intermediate is the Ser175.

The protein belongs to the amidase family. GatA subfamily. In terms of assembly, heterotrimer of A, B and C subunits.

The catalysed reaction is L-glutamyl-tRNA(Gln) + L-glutamine + ATP + H2O = L-glutaminyl-tRNA(Gln) + L-glutamate + ADP + phosphate + H(+). In terms of biological role, allows the formation of correctly charged Gln-tRNA(Gln) through the transamidation of misacylated Glu-tRNA(Gln) in organisms which lack glutaminyl-tRNA synthetase. The reaction takes place in the presence of glutamine and ATP through an activated gamma-phospho-Glu-tRNA(Gln). The polypeptide is Glutamyl-tRNA(Gln) amidotransferase subunit A (Pseudomonas syringae pv. tomato (strain ATCC BAA-871 / DC3000)).